We begin with the raw amino-acid sequence, 617 residues long: Secretogranin-2 (617 aa).

Positions 1 to 27 (MAEAKTHWLGAALSLIPLIFLISGAEA) are cleaved as a signal peptide. Positions 28 to 30 (ASF) are excised as a propeptide. Positions 123-147 (NEPQSVPKENKPHALNSEKNFPIDM) are disordered. Tyr-151 carries the post-translational modification Sulfotyrosine. Phosphoserine is present on residues Ser-174, Ser-268, Ser-432, Ser-532, Ser-555, and Ser-556. The disordered stretch occupies residues 552–583 (NQGSSQETDKLAPVSKRFPVGPPKNDDTPNRQ).

It belongs to the chromogranin/secretogranin protein family. As to quaternary structure, interacts with Secretogranin III/SCG3.

It is found in the secreted. Its function is as follows. Neuroendocrine protein of the granin family that regulates the biogenesis of secretory granules. This Macaca fascicularis (Crab-eating macaque) protein is Secretogranin-2 (SCG2).